We begin with the raw amino-acid sequence, 134 residues long: Agouti-related protein (134 aa).

A signal peptide spans 1-20 (MLTAVLLSCALLLAMPPLQG). Residues 21 to 84 (AQMGPAPLEG…VLDPEGRKPR (64 aa)) constitute a propeptide that is removed on maturation. 5 disulfides stabilise this stretch: Cys89–Cys104, Cys96–Cys110, Cys103–Cys121, Cys107–Cys131, and Cys112–Cys119. In terms of domain architecture, Agouti spans 89–131 (CVRLHESCLGHQVPCCDPCATCYCRFFNAFCYCRKLGTTTNPC). Residues 113–115 (RFF) form an interaction with melanocortin receptors region.

As to quaternary structure, interacts with melanocortin receptors MC3R, MC4R and MC5R.

It is found in the secreted. The protein localises to the golgi apparatus lumen. Its function is as follows. Plays a role in weight homeostasis. Involved in the control of feeding behavior through the central melanocortin system. Acts as alpha melanocyte-stimulating hormone antagonist by inhibiting cAMP production mediated by stimulation of melanocortin receptors within the hypothalamus and adrenal gland. Has very low activity with MC5R. Is an inverse agonist for MC3R and MC4R being able to suppress their constitutive activity. It promotes MC3R and MC4R endocytosis in an arrestin-dependent manner. The polypeptide is Agouti-related protein (AGRP) (Bos taurus (Bovine)).